Consider the following 51-residue polypeptide: Sperm protamine P1 (51 aa).

Over residues Met1–Ser13 the composition is skewed to low complexity. Residues Met1–Cys30 form a disordered region. Over residues Arg14–Cys30 the composition is skewed to basic residues. The cysteines at positions 40 and 48 are disulfide-linked.

This sequence belongs to the protamine P1 family. Cross-linked by interchain disulfide bonds around the DNA-helix. Phosphorylated by SRPK1. Testis.

The protein localises to the nucleus. Its subcellular location is the chromosome. Protamines substitute for histones in the chromatin of sperm during the haploid phase of spermatogenesis. They compact sperm DNA into a highly condensed, stable and inactive complex. In Homo sapiens (Human), this protein is Sperm protamine P1 (PRM1).